A 158-amino-acid polypeptide reads, in one-letter code: NAD(P)H-quinone oxidoreductase subunit J, chloroplastic (158 aa).

It belongs to the complex I 30 kDa subunit family. In terms of assembly, NDH is composed of at least 16 different subunits, 5 of which are encoded in the nucleus.

Its subcellular location is the plastid. The protein localises to the chloroplast thylakoid membrane. It catalyses the reaction a plastoquinone + NADH + (n+1) H(+)(in) = a plastoquinol + NAD(+) + n H(+)(out). It carries out the reaction a plastoquinone + NADPH + (n+1) H(+)(in) = a plastoquinol + NADP(+) + n H(+)(out). Its function is as follows. NDH shuttles electrons from NAD(P)H:plastoquinone, via FMN and iron-sulfur (Fe-S) centers, to quinones in the photosynthetic chain and possibly in a chloroplast respiratory chain. The immediate electron acceptor for the enzyme in this species is believed to be plastoquinone. Couples the redox reaction to proton translocation, and thus conserves the redox energy in a proton gradient. In Daucus carota (Wild carrot), this protein is NAD(P)H-quinone oxidoreductase subunit J, chloroplastic.